The primary structure comprises 120 residues: Large ribosomal subunit protein bL17 (120 aa).

Belongs to the bacterial ribosomal protein bL17 family. In terms of assembly, part of the 50S ribosomal subunit. Contacts protein L32.

This chain is Large ribosomal subunit protein bL17, found in Shouchella clausii (strain KSM-K16) (Alkalihalobacillus clausii).